A 442-amino-acid chain; its full sequence is tRNA modification GTPase MnmE (442 aa).

Positions 24, 82, and 120 each coordinate (6S)-5-formyl-5,6,7,8-tetrahydrofolate. In terms of domain architecture, TrmE-type G spans 217-367 (GLHIVITGEP…LISLIKKKAE (151 aa)). GTP-binding positions include 227–232 (NVGKST), 246–252 (SEYAGTT), and 271–274 (DTAG). Serine 231 serves as a coordination point for Mg(2+). Serine 246 lines the K(+) pocket. Threonine 252 provides a ligand contact to Mg(2+). Residue lysine 442 coordinates (6S)-5-formyl-5,6,7,8-tetrahydrofolate.

It belongs to the TRAFAC class TrmE-Era-EngA-EngB-Septin-like GTPase superfamily. TrmE GTPase family. Homodimer. Heterotetramer of two MnmE and two MnmG subunits. It depends on K(+) as a cofactor.

The protein localises to the cytoplasm. Its function is as follows. Exhibits a very high intrinsic GTPase hydrolysis rate. Involved in the addition of a carboxymethylaminomethyl (cmnm) group at the wobble position (U34) of certain tRNAs, forming tRNA-cmnm(5)s(2)U34. The polypeptide is tRNA modification GTPase MnmE (Wolbachia pipientis subsp. Culex pipiens (strain wPip)).